Consider the following 110-residue polypeptide: NADH-quinone oxidoreductase subunit K (110 aa).

3 consecutive transmembrane segments (helical) span residues 13–33 (LNHYLILSSLVFTIGMFGLFM), 41–61 (ILMSIELMLLAVNINFVAFSV), and 73–93 (IIILTVAAAETAIGLAILLIY).

Belongs to the complex I subunit 4L family. As to quaternary structure, NDH-1 is composed of 14 different subunits. Subunits NuoA, H, J, K, L, M, N constitute the membrane sector of the complex.

It localises to the cell inner membrane. It carries out the reaction a quinone + NADH + 5 H(+)(in) = a quinol + NAD(+) + 4 H(+)(out). In terms of biological role, NDH-1 shuttles electrons from NADH, via FMN and iron-sulfur (Fe-S) centers, to quinones in the respiratory chain. The immediate electron acceptor for the enzyme in this species is believed to be ubiquinone. Couples the redox reaction to proton translocation (for every two electrons transferred, four hydrogen ions are translocated across the cytoplasmic membrane), and thus conserves the redox energy in a proton gradient. The sequence is that of NADH-quinone oxidoreductase subunit K from Rickettsia typhi (strain ATCC VR-144 / Wilmington).